Here is a 283-residue protein sequence, read N- to C-terminus: Elongation factor Ts (283 aa).

Positions 80 to 83 (TDFV) are involved in Mg(2+) ion dislocation from EF-Tu.

It belongs to the EF-Ts family.

The protein resides in the cytoplasm. Its function is as follows. Associates with the EF-Tu.GDP complex and induces the exchange of GDP to GTP. It remains bound to the aminoacyl-tRNA.EF-Tu.GTP complex up to the GTP hydrolysis stage on the ribosome. The chain is Elongation factor Ts from Actinobacillus pleuropneumoniae serotype 3 (strain JL03).